We begin with the raw amino-acid sequence, 124 residues long: Replication restart protein PriB (124 aa).

The region spanning Ile-12–Asp-112 is the SSB domain.

This sequence belongs to the PriB family. As to quaternary structure, homodimer. Interacts with PriA and DnaT. Component of the replication restart primosome. Primosome assembly occurs via a 'hand-off' mechanism. PriA binds to replication forks, subsequently PriB then DnaT bind; DnaT then displaces ssDNA to generate the helicase loading substrate.

In terms of biological role, involved in the restart of stalled replication forks, which reloads the replicative helicase on sites other than the origin of replication; the PriA-PriB pathway is the major replication restart pathway. During primosome assembly it facilitates complex formation between PriA and DnaT on DNA; stabilizes PriA on DNA. Stimulates the DNA unwinding activity of PriA helicase. The protein is Replication restart protein PriB of Haemophilus ducreyi (strain 35000HP / ATCC 700724).